Here is a 134-residue protein sequence, read N- to C-terminus: MRSREVSLVLLALVLCPAPRGSAAPVTAGRAGALAKMYTRGNHWAVGHLMGKKSVAESPQLREEESLKEQLREYAQWEEATRNLLSLLQAKVAQGHQPPRWEPLSIHQPAWDSKDVSNFKDSGSQREGGNPQLY.

The signal sequence occupies residues 1-23; it reads MRSREVSLVLLALVLCPAPRGSA. A Methionine amide modification is found at M50. A propeptide spanning residues 54 to 134 is cleaved from the precursor; sequence SVAESPQLRE…QREGGNPQLY (81 aa). The tract at residues 98–134 is disordered; sequence PPRWEPLSIHQPAWDSKDVSNFKDSGSQREGGNPQLY. The span at 119–134 shows a compositional bias: polar residues; that stretch reads FKDSGSQREGGNPQLY.

The protein belongs to the bombesin/neuromedin-B/ranatensin family.

The protein resides in the secreted. Its subcellular location is the cytoplasmic vesicle. It localises to the secretory vesicle lumen. The protein localises to the cell projection. It is found in the neuron projection. In terms of biological role, stimulates the release of gastrin and other gastrointestinal hormones. Contributes to the perception of prurient stimuli and to the transmission of itch signals in the spinal cord that promote scratching behavior. Contributes primarily to nonhistaminergic itch sensation. In one study, shown to act in the amygdala as part of an inhibitory network which inhibits memory specifically related to learned fear. In another study, shown to act on vasoactive intestinal peptide (VIP)-expressing cells in the auditory cortex, most likely via extrasynaptic diffusion from local and long-range sources, to mediate disinhibition of glutamatergic cells via VIP cell-specific GRPR signaling which leads to enhanced auditory fear memories. Contributes to the regulation of food intake. Inhibits voltage-gated sodium channels but enhances voltage-gated potassium channels in hippocampal neurons. Induces sighing by acting directly on the pre-Botzinger complex, a cluster of several thousand neurons in the ventrolateral medulla responsible for inspiration during respiratory activity. Functionally, induces an itch response through activation of receptors present on mast cells, triggering mast cell degranulation. This Ovis aries (Sheep) protein is Gastrin-releasing peptide (GRP).